The chain runs to 738 residues: Vesicle-fusing ATPase (738 aa).

ATP is bound by residues 507 to 512 and 547 to 554; these read NGIINY and PGCGKSSL.

This sequence belongs to the AAA ATPase family. Interacts with syn7A, snpA and snpC. Requires Mg(2+) as cofactor.

The protein resides in the cytoplasmic vesicle membrane. The protein localises to the endosome membrane. It catalyses the reaction ATP + H2O = ADP + phosphate + H(+). Functionally, required for vesicle-mediated transport. Involved in endocytosis and endosome-endosome fusion. May be required for transport from the endoplasmic reticulum to the Golgi stack, and for the fusion of transport vesicles within the Golgi cisternae. Required for cell polarity, locomotion and chemotaxis. This Dictyostelium discoideum (Social amoeba) protein is Vesicle-fusing ATPase (nsfA).